A 325-amino-acid chain; its full sequence is Small ribosomal subunit protein uS2 (325 aa).

Residues 212–226 are compositionally biased toward basic and acidic residues; it reads KEEQAKAEAERERLA. Residues 212–325 are disordered; it reads KEEQAKAEAE…TEPKASTGNW (114 aa). Low complexity-rich tracts occupy residues 234 to 247 and 261 to 289; these read QPAAPQQDPDQWAD and PVTTAPVPTGGAPPVASTTATPATNTGSG. Residues 290–300 show a composition bias toward polar residues; the sequence is FNQDDWSVPTT.

Belongs to the universal ribosomal protein uS2 family. As to quaternary structure, component of the small ribosomal subunit. Mature ribosomes consist of a small (40S) and a large (60S) subunit. The 40S subunit contains about 33 different proteins and 1 molecule of RNA (18S). The 60S subunit contains about 49 different proteins and 3 molecules of RNA (28S, 5.8S and 5S). Interacts with ribosomal protein S21.

Its subcellular location is the cytoplasm. Its function is as follows. Required for the assembly and/or stability of the 40S ribosomal subunit. Required for the processing of the 20S rRNA-precursor to mature 18S rRNA in a late step of the maturation of 40S ribosomal subunits. The protein is Small ribosomal subunit protein uS2 of Suberites domuncula (Sponge).